Here is a 230-residue protein sequence, read N- to C-terminus: Sugar fermentation stimulation protein homolog (230 aa).

It belongs to the SfsA family.

This chain is Sugar fermentation stimulation protein homolog, found in Clostridium tetani (strain Massachusetts / E88).